An 81-amino-acid chain; its full sequence is U-poneritoxin(01)-Om2a (81 aa).

The first 25 residues, 1–25 (MKPSGITFAFLVVFMMAIMYNSVQA), serve as a signal peptide directing secretion. The propeptide occupies 26–47 (AAIADADADAEAKAFADAFAEA).

It belongs to the formicidae venom precursor-01 superfamily. Truncated sequences of this peptide have also been found in the venom. It is possible they have been cleaved in the venom. Expressed by the venom gland.

It localises to the secreted. Cationic amphipathic alpha-helical peptide with antimicrobial activities against E.coli (MIC=6.2 uM), S.aureus (MIC=6.2 uM), and S.cerevisiae (MIC=50 uM). Also shows histamine-releasing activity (30.1% at 10 uM) and a weak hemolytic activity (10.4% at 50 uM). The protein is U-poneritoxin(01)-Om2a of Odontomachus monticola (Trap-jaw ant).